A 332-amino-acid polypeptide reads, in one-letter code: 2,3-diketo-L-gulonate reductase (332 aa).

The active-site Proton donor is His44. Residues 168 to 174 (ITMVDMS), 224 to 225 (WK), and 304 to 306 (GHE) each bind NAD(+).

It belongs to the LDH2/MDH2 oxidoreductase family. DlgD subfamily. As to quaternary structure, homodimer.

It localises to the cytoplasm. The catalysed reaction is 3-dehydro-L-gulonate + NAD(+) = 2,3-dioxo-L-gulonate + NADH + H(+). It carries out the reaction 3-dehydro-L-gulonate + NADP(+) = 2,3-dioxo-L-gulonate + NADPH + H(+). In terms of biological role, catalyzes the reduction of 2,3-diketo-L-gulonate in the presence of NADH, to form 3-keto-L-gulonate. The sequence is that of 2,3-diketo-L-gulonate reductase from Escherichia coli O127:H6 (strain E2348/69 / EPEC).